Reading from the N-terminus, the 299-residue chain is Dye-decolorizing peroxidase YfeX (299 aa).

Histidine 215 serves as a coordination point for heme.

It belongs to the DyP-type peroxidase family. Heme b serves as cofactor.

The protein localises to the cytoplasm. Has both general peroxidase activity and dye-decolorizing activity. Can catalyze the oxidation of 2,2'-azino-bis(3-ethylbenzothiazoline-6-sulphonic acid) (ABTS), and the phenolic compounds guaiacol and catechol. Also decolorizes the anthraquinone dye reactive blue 19 (RB19). The chain is Dye-decolorizing peroxidase YfeX from Escherichia coli O157:H7.